The primary structure comprises 331 residues: L-lactate dehydrogenase A chain (331 aa).

NAD(+) is bound by residues glycine 29–lysine 57 and arginine 98. Substrate contacts are provided by arginine 105, asparagine 137, and arginine 168. Residue asparagine 137 coordinates NAD(+). The Proton acceptor role is filled by histidine 192. Residue threonine 247 coordinates substrate.

This sequence belongs to the LDH/MDH superfamily. LDH family. As to quaternary structure, homotetramer.

It is found in the cytoplasm. The enzyme catalyses (S)-lactate + NAD(+) = pyruvate + NADH + H(+). It participates in fermentation; pyruvate fermentation to lactate; (S)-lactate from pyruvate: step 1/1. In terms of biological role, interconverts simultaneously and stereospecifically pyruvate and lactate with concomitant interconversion of NADH and NAD(+). In Parachaenichthys charcoti (Charcot's dragonfish), this protein is L-lactate dehydrogenase A chain (ldha).